A 423-amino-acid chain; its full sequence is Transducer protein Htr13 (423 aa).

The span at 1–19 shows a compositional bias: polar residues; sequence MTGPDNSLTDPSASPSTPV. Residues 1–21 form a disordered region; the sequence is MTGPDNSLTDPSASPSTPVAS. The 237-residue stretch at 152 to 388 folds into the Methyl-accepting transducer domain; sequence AVAELIERAR…ELTMMIDEAA (237 aa).

It belongs to the methyl-accepting chemotaxis (MCP) protein family. In terms of processing, methylated by CheR.

It localises to the cytoplasm. Its function is as follows. Potentially involved in chemo- or phototactic signal transduction. In Halobacterium salinarum (strain ATCC 29341 / DSM 671 / R1), this protein is Transducer protein Htr13 (htr13).